The primary structure comprises 320 residues: Olfactory receptor 5C1 (320 aa).

The Extracellular segment spans residues 1-29 (MNSENLTRAAVAPAEFVLLGITNRWDLRV). Residue Asn-5 is glycosylated (N-linked (GlcNAc...) asparagine). Residues 30–50 (ALFLTCLPVYLVSLLGNMGMA) form a helical membrane-spanning segment. Topologically, residues 51–58 (LLIRMDAR) are cytoplasmic. The chain crosses the membrane as a helical span at residues 59–79 (LHTPMYFFLANLSLLDACYSS). Residues 80 to 103 (AIGPKMLVDLLLPRATIPYTACAL) are Extracellular-facing. Residues Cys-101 and Cys-193 are joined by a disulfide bond. A helical membrane pass occupies residues 104-124 (QMFVFAGLADTECCLLAAMAY). Residues 125-143 (DRYVAIRNPLLYTTAMSQR) are Cytoplasmic-facing. Residues 144–164 (LCLALLGASGLGGAVSAFVHT) form a helical membrane-spanning segment. Over 165 to 200 (TLTFRLSFCRSRKINSFFCDIPPLLAISCSDTSLNE) the chain is Extracellular. The helical transmembrane segment at 201–221 (LLLFAICGFIQTATVLAITVS) threads the bilayer. Over 222–241 (YGFIAGAVIHMRSVEGSRRA) the chain is Cytoplasmic. The helical transmembrane segment at 242–262 (ASTGGSHLTAVAMMYGTLIFM) threads the bilayer. Residues 263-275 (YLRPSSSYALDTD) are Extracellular-facing. A helical membrane pass occupies residues 276–296 (KMASVFYTLVIPSLNPLIYSL). Residues 297 to 320 (RNKEVKEALRQTWSRFHCPGQGSQ) are Cytoplasmic-facing.

It belongs to the G-protein coupled receptor 1 family.

Its subcellular location is the cell membrane. In terms of biological role, odorant receptor. In Homo sapiens (Human), this protein is Olfactory receptor 5C1 (OR5C1).